Consider the following 687-residue polypeptide: Phage-like element PBSX protein XkdV (687 aa).

The protein to B.subtilis YqcC.

The sequence is that of Phage-like element PBSX protein XkdV (xkdV) from Bacillus subtilis (strain 168).